Reading from the N-terminus, the 340-residue chain is Ketol-acid reductoisomerase (NADP(+)) (340 aa).

The KARI N-terminal Rossmann domain occupies 3-182 (VQMEYEKDVK…GAARVGLLET (180 aa)). Residues 26–29 (YGSQ), R49, S53, and 83–86 (DEIQ) each bind NADP(+). H108 is an active-site residue. NADP(+) is bound at residue G134. Positions 183–328 (TYKEETEEDL…AELRKAMPFV (146 aa)) constitute a KARI C-terminal knotted domain. 4 residues coordinate Mg(2+): D191, E195, E227, and E231. S252 contacts substrate.

It belongs to the ketol-acid reductoisomerase family. Requires Mg(2+) as cofactor.

The enzyme catalyses (2R)-2,3-dihydroxy-3-methylbutanoate + NADP(+) = (2S)-2-acetolactate + NADPH + H(+). It carries out the reaction (2R,3R)-2,3-dihydroxy-3-methylpentanoate + NADP(+) = (S)-2-ethyl-2-hydroxy-3-oxobutanoate + NADPH + H(+). It functions in the pathway amino-acid biosynthesis; L-isoleucine biosynthesis; L-isoleucine from 2-oxobutanoate: step 2/4. The protein operates within amino-acid biosynthesis; L-valine biosynthesis; L-valine from pyruvate: step 2/4. Functionally, involved in the biosynthesis of branched-chain amino acids (BCAA). Catalyzes an alkyl-migration followed by a ketol-acid reduction of (S)-2-acetolactate (S2AL) to yield (R)-2,3-dihydroxy-isovalerate. In the isomerase reaction, S2AL is rearranged via a Mg-dependent methyl migration to produce 3-hydroxy-3-methyl-2-ketobutyrate (HMKB). In the reductase reaction, this 2-ketoacid undergoes a metal-dependent reduction by NADPH to yield (R)-2,3-dihydroxy-isovalerate. The polypeptide is Ketol-acid reductoisomerase (NADP(+)) (Streptococcus thermophilus (strain ATCC BAA-491 / LMD-9)).